We begin with the raw amino-acid sequence, 53 residues long: ATP synthase protein 8 (53 aa).

Residues Ile-10–Leu-30 form a helical membrane-spanning segment.

The protein belongs to the ATPase protein 8 family. In terms of assembly, F-type ATPases have 2 components, CF(1) - the catalytic core - and CF(0) - the membrane proton channel.

It is found in the mitochondrion membrane. Mitochondrial membrane ATP synthase (F(1)F(0) ATP synthase or Complex V) produces ATP from ADP in the presence of a proton gradient across the membrane which is generated by electron transport complexes of the respiratory chain. F-type ATPases consist of two structural domains, F(1) - containing the extramembraneous catalytic core and F(0) - containing the membrane proton channel, linked together by a central stalk and a peripheral stalk. During catalysis, ATP synthesis in the catalytic domain of F(1) is coupled via a rotary mechanism of the central stalk subunits to proton translocation. Part of the complex F(0) domain. Minor subunit located with subunit a in the membrane. In Artemia franciscana (Brine shrimp), this protein is ATP synthase protein 8 (MT-ATP8).